A 1105-amino-acid polypeptide reads, in one-letter code: Mediator of RNA polymerase II transcription subunit 14 (1105 aa).

The segment at 28–48 (ASQQANGGIYRNGIGKKSHSP) is disordered.

This sequence belongs to the Mediator complex subunit 14 family. Component of the Mediator complex.

The protein localises to the nucleus. In terms of biological role, component of the Mediator complex, a coactivator involved in the regulated transcription of nearly all RNA polymerase II-dependent genes. Mediator functions as a bridge to convey information from gene-specific regulatory proteins to the basal RNA polymerase II transcription machinery. Mediator is recruited to promoters by direct interactions with regulatory proteins and serves as a scaffold for the assembly of a functional preinitiation complex with RNA polymerase II and the general transcription factors. In Coccidioides immitis (strain RS) (Valley fever fungus), this protein is Mediator of RNA polymerase II transcription subunit 14 (RGR1).